A 201-amino-acid chain; its full sequence is 3-isopropylmalate dehydratase small subunit (201 aa).

Belongs to the LeuD family. LeuD type 1 subfamily. Heterodimer of LeuC and LeuD.

It carries out the reaction (2R,3S)-3-isopropylmalate = (2S)-2-isopropylmalate. It participates in amino-acid biosynthesis; L-leucine biosynthesis; L-leucine from 3-methyl-2-oxobutanoate: step 2/4. Catalyzes the isomerization between 2-isopropylmalate and 3-isopropylmalate, via the formation of 2-isopropylmaleate. This Salmonella paratyphi A (strain ATCC 9150 / SARB42) protein is 3-isopropylmalate dehydratase small subunit.